Consider the following 505-residue polypeptide: MAEFQGYLELDRSWKPDLLYPLIFREYIYAFAHDHGLNRSNLLENVGYNNKSSLLIVKRLISRMYQQNHFISSANDSNQNQLFGYNKNLYSQMISEGFAVIVEIPFSLRLVSCLKGTEIVKYYNLRSIHSIFPFLEDKFSHLNYVSDVLIPYPIHLEILVQTLRYWVKDASSLHLLRFFLHDYYNWNSFIIPNKYISIFSKSNPRLFLFLYNSHVFEYESILLFLRNQSSHLRLTSSGGFFERIYFYGKIKHPVEEVFANDFPTSLWFFEDFFMHYVRYQGKSILTSKDTPLFMNKWRYYLVLLWQCHFSVWSQPGRMYINQLCKHSLSFLGYLSNMQINLSVVRSQMLENSFLMDNAMKKIDTLVPISPLIGSLAKMRFCNVLGHPVSKSTWADSSDFDIIDRFAYICRNLFHYYSGSSKKNSLYRVKYILRLSCIKTLARKHKSTVRTFLKRLGSKLLEEFFTEEEEVLSLIFPRTYSALRSSYKGRIWYLDIFCINDLVNHK.

It belongs to the intron maturase 2 family. MatK subfamily.

Its subcellular location is the plastid. The protein resides in the chloroplast. Its function is as follows. Usually encoded in the trnK tRNA gene intron. Probably assists in splicing its own and other chloroplast group II introns. The polypeptide is Maturase K (Ficus carica (Common fig)).